Reading from the N-terminus, the 160-residue chain is SsrA-binding protein (160 aa).

The protein belongs to the SmpB family.

The protein resides in the cytoplasm. In terms of biological role, required for rescue of stalled ribosomes mediated by trans-translation. Binds to transfer-messenger RNA (tmRNA), required for stable association of tmRNA with ribosomes. tmRNA and SmpB together mimic tRNA shape, replacing the anticodon stem-loop with SmpB. tmRNA is encoded by the ssrA gene; the 2 termini fold to resemble tRNA(Ala) and it encodes a 'tag peptide', a short internal open reading frame. During trans-translation Ala-aminoacylated tmRNA acts like a tRNA, entering the A-site of stalled ribosomes, displacing the stalled mRNA. The ribosome then switches to translate the ORF on the tmRNA; the nascent peptide is terminated with the 'tag peptide' encoded by the tmRNA and targeted for degradation. The ribosome is freed to recommence translation, which seems to be the essential function of trans-translation. The sequence is that of SsrA-binding protein from Marinobacter nauticus (strain ATCC 700491 / DSM 11845 / VT8) (Marinobacter aquaeolei).